We begin with the raw amino-acid sequence, 113 residues long: MRHYEIVFMVHPDQSEQVTGMIERYTGSITEAGGVIHRLEDWGRRQLAYPINKLHKAHYVLMNVEAPTEVISELETTFRYNDAVLRNLVMRTKNAVTEASPLVREEKKEAPAA.

Belongs to the bacterial ribosomal protein bS6 family.

In terms of biological role, binds together with bS18 to 16S ribosomal RNA. This chain is Small ribosomal subunit protein bS6, found in Pseudoalteromonas translucida (strain TAC 125).